Consider the following 226-residue polypeptide: MDILIISLKSLGYSRTHKSLDSGPLVVHAVAGAGKSTALRKLILRHPTFTVHTLGVPDKVSIRTRGIQKPGPIPEGNFAILDEYTLDNTTRNSYQALFADPYQAPEFSLEPHFYLETSFRVPRKVADLIAGCGFDFETNSQEEGHLEITGIFKGPLLGKVIAIDEESETTLSKHGVEFVKPCQVTGLEFKVVTVVSAAPIEEIGQSTAFYNAITRSKGLTYVRAGT.

Residues 1-115 (MDILIISLKS…EFSLEPHFYL (115 aa)) form the (+)RNA virus helicase ATP-binding domain. The (+)RNA virus helicase C-terminal domain maps to 116-226 (ETSFRVPRKV…KGLTYVRAGT (111 aa)).

This sequence belongs to the Tymovirales TGBp1 protein family. As to quaternary structure, homodimer and homooligomer. Interacts with capsid protein. Interacts with host AGO1; this interaction targets the host protein for degradation, thereby suppressing the antiviral RNA silencing.

Its subcellular location is the host cytoplasm. Transports viral genome to neighboring plant cells directly through plasmosdesmata, without any budding. The movement protein allows efficient cell to cell propagation, by bypassing the host cell wall barrier. Increases plasmodesma size exclusion limit. Acts as a suppressor of RNA-mediated gene silencing, also known as post-transcriptional gene silencing (PTGS), a mechanism of plant viral defense that limits the accumulation of viral RNAs. The sequence is that of Movement and silencing protein TGBp1 from Brassica campestris (Field mustard).